The chain runs to 253 residues: tRNA pseudouridine synthase A (253 aa).

Asp52 serves as the catalytic Nucleophile. Substrate is bound at residue Tyr110.

This sequence belongs to the tRNA pseudouridine synthase TruA family. In terms of assembly, homodimer.

The catalysed reaction is uridine(38/39/40) in tRNA = pseudouridine(38/39/40) in tRNA. Formation of pseudouridine at positions 38, 39 and 40 in the anticodon stem and loop of transfer RNAs. In Thermus thermophilus (strain ATCC BAA-163 / DSM 7039 / HB27), this protein is tRNA pseudouridine synthase A.